The primary structure comprises 663 residues: Transketolase 2 (663 aa).

Residue His25 participates in substrate binding. Residues His65 and Gly113–Leu115 each bind thiamine diphosphate. Asp154 contributes to the Mg(2+) binding site. The thiamine diphosphate site is built by Gly155 and Asn184. Mg(2+)-binding residues include Asn184 and Ile186. Substrate is bound by residues His259, Arg356, and Ser383. Residue His259 participates in thiamine diphosphate binding. Glu410 functions as the Proton donor in the catalytic mechanism. Phe436 contributes to the thiamine diphosphate binding site. Residues His460, Asp468, and Arg519 each contribute to the substrate site.

Belongs to the transketolase family. Homodimer. The cofactor is Mg(2+). Requires Ca(2+) as cofactor. Mn(2+) is required as a cofactor. It depends on Co(2+) as a cofactor. Thiamine diphosphate serves as cofactor.

It catalyses the reaction D-sedoheptulose 7-phosphate + D-glyceraldehyde 3-phosphate = aldehydo-D-ribose 5-phosphate + D-xylulose 5-phosphate. Functionally, catalyzes the transfer of a two-carbon ketol group from a ketose donor to an aldose acceptor, via a covalent intermediate with the cofactor thiamine pyrophosphate. This is Transketolase 2 (tkt2) from Vibrio parahaemolyticus serotype O3:K6 (strain RIMD 2210633).